The following is a 378-amino-acid chain: Outer membrane protein (378 aa).

The first 22 residues, 1-22 (MRLRTALLATTLMAAAPVAANA), serve as a signal peptide directing secretion. The region spanning 258–378 (PPAPTPARTY…QNRRVEIILH (121 aa)) is the OmpA-like domain.

Its subcellular location is the cell outer membrane. Growth enhancer. The chain is Outer membrane protein from Gluconacetobacter diazotrophicus (strain ATCC 49037 / DSM 5601 / CCUG 37298 / CIP 103539 / LMG 7603 / PAl5).